Here is a 354-residue protein sequence, read N- to C-terminus: Stimulator of interferon genes protein 3 (354 aa).

4 helical membrane passes run 20-40 (VTFASVVIAIISGALLVFALW), 48-68 (INFVFFATALLMLSVIIGELI), 101-121 (YGSCILAVGTTSVLFVCYALL), and 132-152 (YGIFFILNCFVIPQLVFIVGI). Residues Asn178, Tyr183, Arg250, Ile251, Lys253, Glu272, Ser275, and Asn276 each contribute to the 3',3'-cGAMP site.

It belongs to the STING family.

Its subcellular location is the membrane. In terms of biological role, facilitator of innate immune signaling that acts as a sensor of second messenger signals produced by cyclic GMP-AMP synthase-like receptors (cGLRs) and promotes the production of type I interferon. Innate immune response is triggered in response to nucleotides from viruses and bacteria delivered to the cytoplasm. Acts by binding cyclic dinucleotides: recognizes and binds cyclic 3'-3' linked cGAMP (3'-3'-cGAMP), cyclic di-AMP (3',3'-c-di-AMP) and cyclic di-GMP (3',3'-c-di-GMP) second messengers produced by cGLRs in response to nucleotides in the cytosol, such as double-stranded RNA (dsRNA). Upon binding to 3'-3'-cGAMP, 3',3'-c-di-AMP or 3',3'-c-di-GMP, oligomerizes and promotes the recruitment and subsequent activation of the transcription factor IRF3 to induce expression of type I interferon. The polypeptide is Stimulator of interferon genes protein 3 (Stylophora pistillata (Smooth cauliflower coral)).